We begin with the raw amino-acid sequence, 352 residues long: tRNA-specific 2-thiouridylase MnmA (352 aa).

ATP contacts are provided by residues 7 to 14 and leucine 33; that span reads GLSGGVDS. The active-site Nucleophile is the cysteine 94. Cysteine 94 and cysteine 193 are joined by a disulfide. Residue glycine 119 coordinates ATP. The interval 143–145 is interaction with tRNA; that stretch reads KDQ. Cysteine 193 (cysteine persulfide intermediate) is an active-site residue. The interaction with tRNA stretch occupies residues 298-299; it reads RY.

The protein belongs to the MnmA/TRMU family.

The protein resides in the cytoplasm. It catalyses the reaction S-sulfanyl-L-cysteinyl-[protein] + uridine(34) in tRNA + AH2 + ATP = 2-thiouridine(34) in tRNA + L-cysteinyl-[protein] + A + AMP + diphosphate + H(+). In terms of biological role, catalyzes the 2-thiolation of uridine at the wobble position (U34) of tRNA, leading to the formation of s(2)U34. The polypeptide is tRNA-specific 2-thiouridylase MnmA (Nostoc sp. (strain PCC 7120 / SAG 25.82 / UTEX 2576)).